The primary structure comprises 67 residues: Conotoxin Im3.1 (67 aa).

Positions methionine 1–alanine 20 are cleaved as a signal peptide. A propeptide spanning residues arginine 21–arginine 52 is cleaved from the precursor. Disulfide bonds link cysteine 53–cysteine 63, cysteine 54–cysteine 61, and cysteine 59–cysteine 64.

It belongs to the conotoxin M superfamily. As to expression, expressed by the venom duct.

It localises to the secreted. Its function is as follows. Probable neurotoxin. This is Conotoxin Im3.1 from Conus imperialis (Imperial cone).